The following is a 128-amino-acid chain: Aspartate 1-decarboxylase (128 aa).

Serine 25 functions as the Schiff-base intermediate with substrate; via pyruvic acid in the catalytic mechanism. At serine 25 the chain carries Pyruvic acid (Ser). A substrate-binding site is contributed by threonine 57. The Proton donor role is filled by tyrosine 58. 73–75 provides a ligand contact to substrate; it reads GSA.

It belongs to the PanD family. Heterooctamer of four alpha and four beta subunits. Requires pyruvate as cofactor. Is synthesized initially as an inactive proenzyme, which is activated by self-cleavage at a specific serine bond to produce a beta-subunit with a hydroxyl group at its C-terminus and an alpha-subunit with a pyruvoyl group at its N-terminus.

The protein localises to the cytoplasm. The enzyme catalyses L-aspartate + H(+) = beta-alanine + CO2. It participates in cofactor biosynthesis; (R)-pantothenate biosynthesis; beta-alanine from L-aspartate: step 1/1. In terms of biological role, catalyzes the pyruvoyl-dependent decarboxylation of aspartate to produce beta-alanine. In Burkholderia cenocepacia (strain ATCC BAA-245 / DSM 16553 / LMG 16656 / NCTC 13227 / J2315 / CF5610) (Burkholderia cepacia (strain J2315)), this protein is Aspartate 1-decarboxylase.